A 356-amino-acid polypeptide reads, in one-letter code: Serendipity locus protein beta (356 aa).

The C2H2-type 1; degenerate zinc-finger motif lies at Ile171–Asp193. 5 C2H2-type zinc fingers span residues Ala201 to His223, Leu229 to His251, Tyr257 to His279, Leu286 to His308, and Tyr315 to His337.

In terms of assembly, binds chromatin; requires N-terminal regions to form protein-protein contacts, in addition to DNA specific recognition by the zinc fingers.

Its subcellular location is the nucleus. Binds to the consensus DNA sequence 5'-YCAGAGATGCGCA-3'. The chain is Serendipity locus protein beta (Sry-beta) from Drosophila melanogaster (Fruit fly).